The chain runs to 158 residues: NAD(P)H-quinone oxidoreductase subunit J, chloroplastic (158 aa).

Belongs to the complex I 30 kDa subunit family. NDH is composed of at least 16 different subunits, 5 of which are encoded in the nucleus.

Its subcellular location is the plastid. The protein resides in the chloroplast thylakoid membrane. It carries out the reaction a plastoquinone + NADH + (n+1) H(+)(in) = a plastoquinol + NAD(+) + n H(+)(out). It catalyses the reaction a plastoquinone + NADPH + (n+1) H(+)(in) = a plastoquinol + NADP(+) + n H(+)(out). NDH shuttles electrons from NAD(P)H:plastoquinone, via FMN and iron-sulfur (Fe-S) centers, to quinones in the photosynthetic chain and possibly in a chloroplast respiratory chain. The immediate electron acceptor for the enzyme in this species is believed to be plastoquinone. Couples the redox reaction to proton translocation, and thus conserves the redox energy in a proton gradient. The polypeptide is NAD(P)H-quinone oxidoreductase subunit J, chloroplastic (Draba nemorosa (Woodland whitlowgrass)).